Reading from the N-terminus, the 364-residue chain is tRNA 2-selenouridine synthase (364 aa).

Positions Leu14–Ile137 constitute a Rhodanese domain. Cys97 serves as the catalytic S-selanylcysteine intermediate.

The protein belongs to the SelU family. Monomer.

It carries out the reaction 5-methylaminomethyl-2-thiouridine(34) in tRNA + selenophosphate + (2E)-geranyl diphosphate + H2O + H(+) = 5-methylaminomethyl-2-selenouridine(34) in tRNA + (2E)-thiogeraniol + phosphate + diphosphate. It catalyses the reaction 5-methylaminomethyl-2-thiouridine(34) in tRNA + (2E)-geranyl diphosphate = 5-methylaminomethyl-S-(2E)-geranyl-thiouridine(34) in tRNA + diphosphate. The enzyme catalyses 5-methylaminomethyl-S-(2E)-geranyl-thiouridine(34) in tRNA + selenophosphate + H(+) = 5-methylaminomethyl-2-(Se-phospho)selenouridine(34) in tRNA + (2E)-thiogeraniol. The catalysed reaction is 5-methylaminomethyl-2-(Se-phospho)selenouridine(34) in tRNA + H2O = 5-methylaminomethyl-2-selenouridine(34) in tRNA + phosphate. Its function is as follows. Involved in the post-transcriptional modification of the uridine at the wobble position (U34) of tRNA(Lys), tRNA(Glu) and tRNA(Gln). Catalyzes the conversion of 2-thiouridine (S2U-RNA) to 2-selenouridine (Se2U-RNA). Acts in a two-step process involving geranylation of 2-thiouridine (S2U) to S-geranyl-2-thiouridine (geS2U) and subsequent selenation of the latter derivative to 2-selenouridine (Se2U) in the tRNA chain. The chain is tRNA 2-selenouridine synthase from Escherichia coli O17:K52:H18 (strain UMN026 / ExPEC).